We begin with the raw amino-acid sequence, 490 residues long: Aspartyl/glutamyl-tRNA(Asn/Gln) amidotransferase subunit B (490 aa).

The protein belongs to the GatB/GatE family. GatB subfamily. As to quaternary structure, heterotrimer of A, B and C subunits.

It carries out the reaction L-glutamyl-tRNA(Gln) + L-glutamine + ATP + H2O = L-glutaminyl-tRNA(Gln) + L-glutamate + ADP + phosphate + H(+). It catalyses the reaction L-aspartyl-tRNA(Asn) + L-glutamine + ATP + H2O = L-asparaginyl-tRNA(Asn) + L-glutamate + ADP + phosphate + 2 H(+). Functionally, allows the formation of correctly charged Asn-tRNA(Asn) or Gln-tRNA(Gln) through the transamidation of misacylated Asp-tRNA(Asn) or Glu-tRNA(Gln) in organisms which lack either or both of asparaginyl-tRNA or glutaminyl-tRNA synthetases. The reaction takes place in the presence of glutamine and ATP through an activated phospho-Asp-tRNA(Asn) or phospho-Glu-tRNA(Gln). In Synechococcus sp. (strain JA-3-3Ab) (Cyanobacteria bacterium Yellowstone A-Prime), this protein is Aspartyl/glutamyl-tRNA(Asn/Gln) amidotransferase subunit B.